The chain runs to 118 residues: Large ribosomal subunit protein bL20 (118 aa).

Belongs to the bacterial ribosomal protein bL20 family.

Its function is as follows. Binds directly to 23S ribosomal RNA and is necessary for the in vitro assembly process of the 50S ribosomal subunit. It is not involved in the protein synthesizing functions of that subunit. This Oceanobacillus iheyensis (strain DSM 14371 / CIP 107618 / JCM 11309 / KCTC 3954 / HTE831) protein is Large ribosomal subunit protein bL20.